Here is a 118-residue protein sequence, read N- to C-terminus: MSGGSSCSQTPSRAIPATRRVVLGDGVQLPPGDYSTTPGGTLFSTTPGGTRIIYDRKFLMECRNSPVTKTPPRDLPTIPGVTSPSSDEPPMEASQSHLRNSPEDKRAGGEESQFEMDI.

Composition is skewed to polar residues over residues 1-12 (MSGGSSCSQTPS) and 34-48 (YSTT…TTPG). 2 disordered regions span residues 1 to 20 (MSGG…ATRR) and 25 to 48 (DGVQ…TTPG). Position 2 is an N-acetylserine (Ser2). A Phosphothreonine; by MTOR modification is found at Thr37. Thr41 is subject to Phosphothreonine. Ser44 carries the post-translational modification Phosphoserine. A Phosphothreonine; by MTOR modification is found at Thr46. The residue at position 50 (Thr50) is a Phosphothreonine. Position 54 is a phosphotyrosine (Tyr54). The short motif at 54 to 60 (YDRKFLM) is the YXXXXLphi motif element. Residue Lys57 forms a Glycyl lysine isopeptide (Lys-Gly) (interchain with G-Cter in ubiquitin) linkage. Residues 64–118 (NSPVTKTPPRDLPTIPGVTSPSSDEPPMEASQSHLRNSPEDKRAGGEESQFEMDI) form a disordered region. Residue Ser65 is modified to Phosphoserine; by DYRK2, MAPK1, MAPK3 and MTOR. Thr70 carries the post-translational modification Phosphothreonine; by MTOR. Thr77 bears the Phosphothreonine mark. Residues Ser83 and Ser96 each carry the phosphoserine modification. Positions 100-109 (NSPEDKRAGG) are enriched in basic and acidic residues. Phosphoserine; by DYRK2 is present on Ser101. The residue at position 112 (Ser112) is a Phosphoserine. The TOS motif motif lies at 114 to 118 (FEMDI).

Belongs to the eIF4E-binding protein family. As to quaternary structure, hypophosphorylated EIF4EBP1 competes with EIF4G1/EIF4G3 to interact with EIF4E; insulin stimulated MAP-kinase (MAPK1 and MAPK3) or mTORC1 phosphorylation of EIF4EBP1 causes dissociation of the complex allowing EIF4G1/EIF4G3 to bind and consequent initiation of translation. Interacts (via TOS motif) with RPTOR; promoting phosphorylation by mTORC1. Post-translationally, phosphorylated on serine and threonine residues in response to insulin, EGF and PDGF. Phosphorylation at Thr-37, Thr-46, Ser-65 and Thr-70, corresponding to the hyperphosphorylated form, is regulated by mTORC1 and abolishes binding to EIF4E. In terms of processing, ubiquitinated: when eIF4E levels are low, hypophosphorylated form is ubiquitinated by the BCR(KLHL25) complex, leading to its degradation and serving as a homeostatic mechanism to maintain translation and prevent eIF4E inhibition when eIF4E levels are low. Not ubiquitinated when hyperphosphorylated (at Thr-37, Thr-46, Ser-65 and Thr-70) or associated with eIF4E.

The protein localises to the cytoplasm. It localises to the nucleus. Functionally, repressor of translation initiation that regulates EIF4E activity by preventing its assembly into the eIF4F complex: hypophosphorylated form competes with EIF4G1/EIF4G3 and strongly binds to EIF4E, leading to repress translation. In contrast, hyperphosphorylated form dissociates from EIF4E, allowing interaction between EIF4G1/EIF4G3 and EIF4E, leading to initiation of translation. Mediates the regulation of protein translation by hormones, growth factors and other stimuli that signal through the MAP kinase and mTORC1 pathways. The polypeptide is Eukaryotic translation initiation factor 4E-binding protein 1 (EIF4EBP1) (Homo sapiens (Human)).